A 257-amino-acid polypeptide reads, in one-letter code: Protein TONNEAU 1b (257 aa).

In terms of domain architecture, LisH spans Ser-73–Lys-105. Disordered stretches follow at residues Gln-148 to Pro-216 and Leu-231 to Asp-257. Residues Ser-187–Ser-199 show a composition bias toward low complexity. 2 stretches are compositionally biased toward basic and acidic residues: residues Tyr-201 to Thr-212 and Asn-244 to Asp-257.

In terms of assembly, interacts with CEN1, LNG1/TRM2 and LNG2/TRM1 (via C-terminus).

Its subcellular location is the cytoplasm. It localises to the cytoskeleton. Its function is as follows. Involved in the control of the dynamic organization of the cortical cytoskeleton. May play a role in the organization of microtubule arrays at the centrosome through interaction with centrin 1 (CEN1). The polypeptide is Protein TONNEAU 1b (TON1B) (Arabidopsis thaliana (Mouse-ear cress)).